A 417-amino-acid chain; its full sequence is Sterile alpha motif domain-containing protein 14 (417 aa).

Positions 36–302 (QLLAKGRRHR…GGPRQETKCS (267 aa)) are disordered. Residues 40 to 49 (KGRRHRPSRS) are compositionally biased toward basic residues. Phosphoserine occurs at positions 84 and 108. Over residues 138 to 153 (SGSPPRSAPSSDSSPS) the composition is skewed to low complexity. Positions 159 to 173 (PRAEPHSEDDSRDAS) are enriched in basic and acidic residues. A phosphoserine mark is found at Ser-173 and Ser-179. 2 stretches are compositionally biased toward low complexity: residues 244–260 (SGKGSASSGSTTSPTCS) and 276–289 (STLSDDSTPPSSSP). Ser-279 is subject to Phosphoserine. A Phosphothreonine modification is found at Thr-283. The SAM domain maps to 326–389 (WTSQQVGQWL…KRKLKELAAA (64 aa)). Positions 375-416 (DRALVKRKLKELAAAAEKERKAQEKTAKQREKLRRRENDAKK) form a coiled coil. The segment at 390–417 (AEKERKAQEKTAKQREKLRRRENDAKKS) is disordered.

The protein is Sterile alpha motif domain-containing protein 14 (Samd14) of Mus musculus (Mouse).